The primary structure comprises 144 residues: Ribosome maturation factor RimP (144 aa).

It belongs to the RimP family.

It is found in the cytoplasm. Required for maturation of 30S ribosomal subunits. This Methylobacillus flagellatus (strain ATCC 51484 / DSM 6875 / VKM B-1610 / KT) protein is Ribosome maturation factor RimP.